Reading from the N-terminus, the 271-residue chain is Formamidopyrimidine-DNA glycosylase (271 aa).

The active-site Schiff-base intermediate with DNA is proline 2. Glutamate 3 acts as the Proton donor in catalysis. Lysine 58 acts as the Proton donor; for beta-elimination activity in catalysis. DNA-binding residues include histidine 91, arginine 110, and arginine 152. Residues 237–271 form an FPG-type zinc finger; the sequence is RVYDRAGQPCRVCGEPIRCVRLGQRATYYCPRCQR. The Proton donor; for delta-elimination activity role is filled by arginine 261.

This sequence belongs to the FPG family. In terms of assembly, monomer. Zn(2+) is required as a cofactor.

The enzyme catalyses Hydrolysis of DNA containing ring-opened 7-methylguanine residues, releasing 2,6-diamino-4-hydroxy-5-(N-methyl)formamidopyrimidine.. It catalyses the reaction 2'-deoxyribonucleotide-(2'-deoxyribose 5'-phosphate)-2'-deoxyribonucleotide-DNA = a 3'-end 2'-deoxyribonucleotide-(2,3-dehydro-2,3-deoxyribose 5'-phosphate)-DNA + a 5'-end 5'-phospho-2'-deoxyribonucleoside-DNA + H(+). Functionally, involved in base excision repair of DNA damaged by oxidation or by mutagenic agents. Acts as a DNA glycosylase that recognizes and removes damaged bases. Has a preference for oxidized purines, such as 7,8-dihydro-8-oxoguanine (8-oxoG). Has AP (apurinic/apyrimidinic) lyase activity and introduces nicks in the DNA strand. Cleaves the DNA backbone by beta-delta elimination to generate a single-strand break at the site of the removed base with both 3'- and 5'-phosphates. The chain is Formamidopyrimidine-DNA glycosylase from Methylococcus capsulatus (strain ATCC 33009 / NCIMB 11132 / Bath).